The sequence spans 215 residues: Cytochrome b6 (215 aa).

Residues 32 to 52 (IFYCLGGITLTCFLVQVATGF) form a helical membrane-spanning segment. Cys35 contacts heme c. Residues His86 and His100 each contribute to the heme b site. 3 consecutive transmembrane segments (helical) span residues 90–110 (ASMMVLMMILHVFRVYLTGGF), 116–136 (LTWVTGVVLGVLTASFGVTGY), and 186–206 (LHTFVLPLLTAVFMLMHFPMI). Residues His187 and His202 each coordinate heme b.

The protein belongs to the cytochrome b family. PetB subfamily. As to quaternary structure, the 4 large subunits of the cytochrome b6-f complex are cytochrome b6, subunit IV (17 kDa polypeptide, PetD), cytochrome f and the Rieske protein, while the 4 small subunits are PetG, PetL, PetM and PetN. The complex functions as a dimer. Heme b is required as a cofactor. It depends on heme c as a cofactor.

Its subcellular location is the plastid. It localises to the chloroplast thylakoid membrane. Component of the cytochrome b6-f complex, which mediates electron transfer between photosystem II (PSII) and photosystem I (PSI), cyclic electron flow around PSI, and state transitions. The polypeptide is Cytochrome b6 (Vitis vinifera (Grape)).